A 132-amino-acid chain; its full sequence is Histone H2B.1 (132 aa).

Positions 1–13 (MSSKASKAPASKA) are enriched in low complexity. The tract at residues 1–40 (MSSKASKAPASKAPAEKKPAAKKTSSSVDASKKRTKTRKE) is disordered. Lysine 7 carries the post-translational modification N6-acetyllysine; alternate. Lysine 7 is covalently cross-linked (Glycyl lysine isopeptide (Lys-Gly) (interchain with G-Cter in SUMO); alternate). The residue at position 11 (serine 11) is a Phosphoserine. The residue at position 12 (lysine 12) is an N6-acetyllysine. The residue at position 17 (lysine 17) is an N6-acetyllysine; alternate. Lysine 17 is covalently cross-linked (Glycyl lysine isopeptide (Lys-Gly) (interchain with G-Cter in SUMO); alternate). Lysine 18 is covalently cross-linked (Glycyl lysine isopeptide (Lys-Gly) (interchain with G-Cter in SUMO)). Residue lysine 125 forms a Glycyl lysine isopeptide (Lys-Gly) (interchain with G-Cter in ubiquitin) linkage.

The protein belongs to the histone H2B family. The nucleosome is a histone octamer containing two molecules each of H2A, H2B, H3 and H4 assembled in one H3-H4 heterotetramer and two H2A-H2B heterodimers. The octamer wraps approximately 147 bp of DNA. Post-translationally, monoubiquitinated by the UBC2-BRE1 complex to form H2BK123ub1. H2BK123ub1 gives a specific tag for epigenetic transcriptional activation and is also prerequisite for H3K4me and H3K79me formation. H2BK123ub1 also modulates the formation of double-strand breaks during meiosis and is a prerequisite for DNA-damage checkpoint activation. In terms of processing, phosphorylated by STE20 to form H2BS10ph during progression through meiotic prophase. May be correlated with chromosome condensation. Acetylated by GCN5 to form H2BK11ac and H2BK16ac. H2BK16ac can also be formed by ESA1. Acetylation of N-terminal lysines and particularly formation of H2BK11acK16ac has a positive effect on transcription. Post-translationally, sumoylation to form H2BK6su and probably also H2BK16su or H2BK17su, occurs preferentially near the telomeres and represses gene transcription.

The protein resides in the nucleus. Its subcellular location is the chromosome. Core component of nucleosome. Nucleosomes wrap and compact DNA into chromatin, limiting DNA accessibility to the cellular machineries which require DNA as a template. Histones thereby play a central role in transcription regulation, DNA repair, DNA replication and chromosomal stability. DNA accessibility is regulated via a complex set of post-translational modifications of histones, also called histone code, and nucleosome remodeling. The sequence is that of Histone H2B.1 (HTB1) from Eremothecium gossypii (strain ATCC 10895 / CBS 109.51 / FGSC 9923 / NRRL Y-1056) (Yeast).